The primary structure comprises 603 residues: Probable potassium transport system protein Kup (603 aa).

The next 12 membrane-spanning stretches (helical) occupy residues 15–35, 43–63, 94–114, 136–156, 163–183, 201–221, 244–264, 284–304, 336–356, 367–387, 391–411, and 415–435; these read GLVF…IFLL, VIGV…VEYA, AAFI…DGVI, IGQG…FSVQ, ITWV…FSGI, AISF…EVIL, AWRL…AFII, IYIP…QAMI, IYIG…IFEF, GLAV…IFYL, MFRS…LLSN, and IPHG…LIII.

Belongs to the HAK/KUP transporter (TC 2.A.72) family.

The protein resides in the cell membrane. It catalyses the reaction K(+)(in) + H(+)(in) = K(+)(out) + H(+)(out). In terms of biological role, transport of potassium into the cell. Likely operates as a K(+):H(+) symporter. In Methanosarcina acetivorans (strain ATCC 35395 / DSM 2834 / JCM 12185 / C2A), this protein is Probable potassium transport system protein Kup.